We begin with the raw amino-acid sequence, 66 residues long: Large ribosomal subunit protein bL35 (66 aa).

This sequence belongs to the bacterial ribosomal protein bL35 family.

The protein is Large ribosomal subunit protein bL35 of Deinococcus deserti (strain DSM 17065 / CIP 109153 / LMG 22923 / VCD115).